The following is a 209-amino-acid chain: 3-demethoxyubiquinol 3-hydroxylase (209 aa).

Residues 23–36 (PHATRAAPAPAQAP) show a composition bias toward low complexity. Residues 23–42 (PHATRAAPAPAQAPGEMTDS) are disordered. Fe cation-binding residues include Glu58, Glu88, His91, Glu140, Glu172, and His175.

It belongs to the COQ7 family. The cofactor is Fe cation.

The protein resides in the cell membrane. The enzyme catalyses a 5-methoxy-2-methyl-3-(all-trans-polyprenyl)benzene-1,4-diol + AH2 + O2 = a 3-demethylubiquinol + A + H2O. It participates in cofactor biosynthesis; ubiquinone biosynthesis. Catalyzes the hydroxylation of 2-nonaprenyl-3-methyl-6-methoxy-1,4-benzoquinol during ubiquinone biosynthesis. In Variovorax paradoxus (strain S110), this protein is 3-demethoxyubiquinol 3-hydroxylase.